The chain runs to 888 residues: Molybdenum cofactor sulfurase (888 aa).

Residue Ser34 is modified to Phosphoserine. N6-(pyridoxal phosphate)lysine is present on Lys264. Cys424 is an active-site residue. A phosphoserine mark is found at Ser528 and Ser530. The MOSC domain maps to 706-867 (KQSSNSQRNA…LSVGSQVLPV (162 aa)).

Belongs to the class-V pyridoxal-phosphate-dependent aminotransferase family. MOCOS subfamily. It depends on pyridoxal 5'-phosphate as a cofactor.

It carries out the reaction Mo-molybdopterin + L-cysteine + AH2 = thio-Mo-molybdopterin + L-alanine + A + H2O. Its pathway is cofactor biosynthesis; molybdopterin biosynthesis. Its function is as follows. Sulfurates the molybdenum cofactor. Sulfation of molybdenum is essential for xanthine dehydrogenase (XDH) and aldehyde oxidase (ADO) enzymes in which molybdenum cofactor is liganded by 1 oxygen and 1 sulfur atom in active form. In vitro, the C-terminal domain is able to reduce N-hydroxylated prodrugs, such as benzamidoxime. The sequence is that of Molybdenum cofactor sulfurase from Homo sapiens (Human).